Reading from the N-terminus, the 113-residue chain is Large ribosomal subunit protein uL22 (113 aa).

The protein belongs to the universal ribosomal protein uL22 family. Part of the 50S ribosomal subunit.

Functionally, this protein binds specifically to 23S rRNA; its binding is stimulated by other ribosomal proteins, e.g. L4, L17, and L20. It is important during the early stages of 50S assembly. It makes multiple contacts with different domains of the 23S rRNA in the assembled 50S subunit and ribosome. The globular domain of the protein is located near the polypeptide exit tunnel on the outside of the subunit, while an extended beta-hairpin is found that lines the wall of the exit tunnel in the center of the 70S ribosome. The chain is Large ribosomal subunit protein uL22 from Anoxybacillus flavithermus (strain DSM 21510 / WK1).